Here is an 81-residue protein sequence, read N- to C-terminus: Omega-conotoxin-like 3 (81 aa).

The N-terminal stretch at 1 to 22 (MKLTCMMIVAVLFLTASIFITA) is a signal peptide. The propeptide occupies 23–51 (DNSRNGIENLPRMRRHEMKKPKASKLNKR). Disulfide bonds link cysteine 53–cysteine 71, cysteine 60–cysteine 75, and cysteine 70–cysteine 79.

Belongs to the conotoxin O1 superfamily. In terms of tissue distribution, expressed by the venom duct.

Its subcellular location is the secreted. In terms of biological role, omega-conotoxins act at presynaptic membranes, they bind and block voltage-gated calcium channels (Cav). This is Omega-conotoxin-like 3 from Conus imperialis (Imperial cone).